The sequence spans 203 residues: Ras-related protein Rab-13 (203 aa).

Positions 17, 18, 20, 21, 22, 23, and 40 each coordinate GTP. Residue Thr22 coordinates Mg(2+). The Switch 1 signature appears at 31–45 (DSFNNTYISTIGIDF). Thr40 provides a ligand contact to Mg(2+). Glycyl lysine isopeptide (Lys-Gly) (interchain with G-Cter in ubiquitin) cross-links involve residues Lys46 and Lys58. Asp63 provides a ligand contact to Mg(2+). Residues 63 to 80 (DTAGQERFKTITTAYYRG) carry the Switch 2 motif. GTP is bound by residues Gly66, Asn121, Lys122, Asp124, Ala152, and Lys153. The segment at 173–203 (SGGRRSGNSHKAPGTDLKPCDKKNTSKCSLG) is disordered. Ser178 is subject to Phosphoserine. Cysteine methyl ester is present on Cys200. Cys200 carries the S-geranylgeranyl cysteine lipid modification. Positions 201-203 (SLG) are cleaved as a propeptide — removed in mature form.

The protein belongs to the small GTPase superfamily. Rab family. Interacts (GTP-bound form) with MICALL2; competes with RAB8A and is involved in tight junctions assembly. Interacts (GTP-bound form) with MICALL1. Interacts (GTP-bound form) with MICAL1, MICAL3, MICALCL, EHBP1 and EHBP1L1; ternary complexes of RAB8A, RAB13 and either MICAL1 or EHBP1L1 are possible. Interacts with PRKACA; downstream effector of RAB13 involved in tight junction assembly. Interacts with GRB2; may recruit RAB13 to the leading edge of migrating endothelial cells where it can activate RHOA. Interacts (isoprenylated form) with PDE6D; dissociates RAB13 from membranes. Interacts with BICDL2/BICDR2. Interacts with LEPROT and LEPROTL1. It depends on Mg(2+) as a cofactor. Post-translationally, ubiquitinated via 'Lys-11'-linked ubiquitination on Lys-46 and Lys-58; impairing the recruitment of guanosine diphosphate (GDP) dissociation inhibitor 1/GDI1.

It localises to the cell membrane. It is found in the cytoplasmic vesicle membrane. The protein resides in the cell junction. The protein localises to the tight junction. Its subcellular location is the golgi apparatus. It localises to the trans-Golgi network membrane. It is found in the recycling endosome membrane. The protein resides in the cell projection. The protein localises to the lamellipodium. It catalyses the reaction GTP + H2O = GDP + phosphate + H(+). Its activity is regulated as follows. Regulated by guanine nucleotide exchange factors (GEFs) including DENND1C, which promote the exchange of bound GDP for free GTP. Regulated by GTPase activating proteins (GAPs) which increase the GTP hydrolysis activity. Inhibited by GDP dissociation inhibitors (GDIs). Activated in response to insulin. The small GTPases Rab are key regulators of intracellular membrane trafficking, from the formation of transport vesicles to their fusion with membranes. Rabs cycle between an inactive GDP-bound form and an active GTP-bound form that is able to recruit to membranes different sets of downstream effectors directly responsible for vesicle formation, movement, tethering and fusion. RAB13 is involved in endocytic recycling and regulates the transport to the plasma membrane of transmembrane proteins like the tight junction protein OCLN/occludin. Thereby, it regulates the assembly and the activity of tight junctions. Moreover, it may also regulate tight junction assembly by activating the PKA signaling pathway and by reorganizing the actin cytoskeleton through the activation of the downstream effectors PRKACA and MICALL2 respectively. Through its role in tight junction assembly, may play a role in the establishment of Sertoli cell barrier. Plays also a role in angiogenesis through regulation of endothelial cells chemotaxis. Also involved in neurite outgrowth. Has also been proposed to play a role in post-Golgi membrane trafficking from the TGN to the recycling endosome. Finally, it has been involved in insulin-induced transport to the plasma membrane of the glucose transporter GLUT4 and therefore may play a role in glucose homeostasis. In Canis lupus familiaris (Dog), this protein is Ras-related protein Rab-13 (RAB13).